Here is a 301-residue protein sequence, read N- to C-terminus: Multifunctional dioxygenase ausE (301 aa).

2 residues coordinate substrate: Arg72 and Gln127. Residues His130 and Asp132 each coordinate Fe cation. Residue Thr167 coordinates substrate. His214 serves as a coordination point for Fe cation. Arg226 provides a ligand contact to substrate.

Belongs to the PhyH family. As to quaternary structure, homodimer. Requires Fe cation as cofactor.

It catalyses the reaction preaustinoid A1 + 2-oxoglutarate + O2 = preaustinoid A2 + succinate + CO2 + H2O. The catalysed reaction is preaustinoid A2 + 2-oxoglutarate + O2 = preaustinoid A3 + succinate + CO2 + H2O. The enzyme catalyses berkeleyone A + 2-oxoglutarate + O2 = preaustinoid A + succinate + CO2 + H2O. The protein operates within secondary metabolite biosynthesis; terpenoid biosynthesis. Multifunctional dioxygenase; part of the gene cluster A that mediates the biosynthesis of the fungal meroterpenoid acetoxydehydroaustin. The first step of the pathway is the synthesis of 3,5-dimethylorsellinic acid by the polyketide synthase ausA. 3,5-dimethylorsellinic acid is then prenylated by the polyprenyl transferase ausN. Further epoxidation by the FAD-dependent monooxygenase ausM and cyclization by the probable terpene cyclase ausL lead to the formation of protoaustinoid A. Protoaustinoid A is then oxidized to spiro-lactone preaustinoid A3 by the combined action of the FAD-binding monooxygenases ausB and ausC, and the dioxygenase ausE. Acid-catalyzed keto-rearrangement and ring contraction of the tetraketide portion of preaustinoid A3 by ausJ lead to the formation of preaustinoid A4. The aldo-keto reductase ausK, with the help of ausH, is involved in the next step by transforming preaustinoid A4 into isoaustinone which is in turn hydroxylated by the P450 monooxygenase ausI to form austinolide. The cytochrome P450 monooxygenase ausG then modifies austinolide to austinol. Austinol is further acetylated to austin by the O-acetyltransferase ausP, which spontaneously changes to dehydroaustin. The cytochrome P450 monooxygenase then converts dehydroaustin is into 7-dehydrodehydroaustin. The hydroxylation catalyzed by ausR permits the second O-acetyltransferase ausQ to add an additional acetyl group to the molecule, leading to the formation of acetoxydehydroaustin. Due to genetic rearrangements of the clusters and the subsequent loss of some enzymes, the end product of the Penicillium brasilianum austinoid biosynthesis clusters is acetoxydehydroaustin. The polypeptide is Multifunctional dioxygenase ausE (Penicillium brasilianum).